We begin with the raw amino-acid sequence, 154 residues long: Superoxide dismutase [Cu-Zn] (154 aa).

Cu cation is bound by residues His-47, His-49, and His-64. Cys-58 and Cys-147 are joined by a disulfide. Zn(2+) contacts are provided by His-64, His-72, His-81, and Asp-84. His-121 contributes to the Cu cation binding site. Arg-144 contacts substrate.

It belongs to the Cu-Zn superoxide dismutase family. As to quaternary structure, homodimer. Cu cation is required as a cofactor. It depends on Zn(2+) as a cofactor.

The protein localises to the cytoplasm. The catalysed reaction is 2 superoxide + 2 H(+) = H2O2 + O2. Functionally, destroys radicals which are normally produced within the cells and which are toxic to biological systems. The sequence is that of Superoxide dismutase [Cu-Zn] (SOD1) from Podospora anserina (Pleurage anserina).